A 194-amino-acid polypeptide reads, in one-letter code: Cupin-domain-containing oxidoreductase virC (194 aa).

A Cupin type-2 domain is found at 106-175 (IDFAPNVISP…GTLPGRMMWV (70 aa)).

Belongs to the virC family.

The protein operates within secondary metabolite biosynthesis. Functionally, cupin-domain-containing oxidoreductase; part of the gene cluster that mediates the biosynthesis of virensols and trichoxide, fungal natural products that contain or are derived from a salicylaldehyde core. The pathway begins with the synthesis of the reduced chain in virensol C by the highly reducing polyketide synthase virA via condensation of one acetate and 8 malonate units. VirA has interesting programming rules since the first 2 ketides are fully reduced, the 3 following ketides undergo beta-dehydration, and the last 3 ketides are only reduced to beta-hydroxys to yield the trihydroxy portion. The production of aldehyde virensol C by virA alone is surprising, since virA does not contain a reductase (R) domain that is typically associated with reductive product release in HRPKS. The cupin-domain enzyme virC is involved in enhancing virA product turnover. The short-chain dehydrogenase virB then oxidizes the C-7 alcohol of virensol C to a ketone, yielding virensol D. Virensol D is further transformed to salicylaldehyde 5-deoxyaurocitrin by the short-chain dehydrogenase virD. VirD catalyzes the dehydrogenation of C-3 to form the beta-ketone aldehyde, which is followed by the generation of the nucleophilic C-2 that is required for the intramolecular aldol condensation between C-2 and C-7, itself followed by dehydration and aromatization which leads to salicylaldehyde 5-deoxyaurocitrin. While the dehydrogenation of virensol D is definitely catalyzed by virD, the aldol condensation and dehydration may be uncatalyzed or assisted by virD. The short chain dehydrogenase virG then converts salicylaldehyde 5-deoxyaurocitrin into virensol B which is further hydroxylated by the cytochrome P450 monooxygenase virE to yield the hydroquinone virensol A. VirI then may oxidize virensol A to form the quinone, while virH performs the epoxidation. Finally, the two remaining short-chain dehydrogenases, virK and virL, are probably responsible for reducing the ketones to the corresponding alcohols to furnish the epoxycyclohexanol structure in trichoxide. This chain is Cupin-domain-containing oxidoreductase virC, found in Hypocrea virens (strain Gv29-8 / FGSC 10586) (Gliocladium virens).